The primary structure comprises 136 residues: uncharacterized protein (136 aa).

Disordered stretches follow at residues 23–44 (QESL…KEDN) and 56–95 (DGVI…ESAR). Positions 61–79 (SEEGCSSSGEKENSGLCSE) are enriched in low complexity. Acidic residues predominate over residues 80 to 91 (ESSEEDPEEAEE).

This is an uncharacterized protein from Saccharomyces cerevisiae (strain ATCC 204508 / S288c) (Baker's yeast).